A 321-amino-acid polypeptide reads, in one-letter code: NADPH-dependent codeinone reductase 1-1 (321 aa).

Residues Thr27 and Asp51 each contribute to the NADPH site. Catalysis depends on proton donor residues Tyr56 and His119. His119 lines the substrate pocket. 5 residues coordinate NADPH: Gln187, Ser214, Leu216, Ser264, and Arg269.

Belongs to the aldo/keto reductase family. In terms of tissue distribution, latex secreting cells (laticifer cells). Expressed constitutively and ubiquitously with highest levels in capsules. Restricted to the parietal region of sieve elements adjacent or proximal to laticifers in roots, stems, leaves and carpels.

It is found in the cytoplasm. The protein localises to the cytosol. It catalyses the reaction codeine + NADP(+) = codeinone + NADPH + H(+). The enzyme catalyses neopine + NADP(+) = neopinone + NADPH + H(+). The catalysed reaction is morphine + NADP(+) = morphinone + NADPH + H(+). It carries out the reaction neomorphine + NADP(+) = neomorphinone + NADPH + H(+). It functions in the pathway alkaloid biosynthesis; morphine biosynthesis. In terms of biological role, NADPH-dependent reductase involved in biosynthesis of morphinan-type benzylisoquinoline and opiate alkaloids natural products. Reduces codeinone to codeine in the penultimate step in morphine biosynthesis. Can use morphinone, hydrocodone and hydromorphone as substrate during reductive reaction with NADPH as cofactor, and morphine and dihydrocodeine as substrate during oxidative reaction with NADP as cofactor. Converts morphinone to morphine, and neomorphinone to neomorphine. Reduces irreversibly neopinone, a spontaneous isomer of codeinone, to neopine; in planta, neopine levels are limited to low levels. The protein is NADPH-dependent codeinone reductase 1-1 of Papaver somniferum (Opium poppy).